We begin with the raw amino-acid sequence, 101 residues long: MERRTGVVLIIFVTFCEAMMARAIEDFDTHYTKKIREFLLFIIHTSCTMVAFIIGNLAMTRPRRTHHNTITAPDETIHDDILLPPAYKSLASAPALGIKMV.

The first 23 residues, 1-23 (MERRTGVVLIIFVTFCEAMMARA), serve as a signal peptide directing secretion. A helical transmembrane segment spans residues 38–58 (FLLFIIHTSCTMVAFIIGNLA).

It localises to the host membrane. This is an uncharacterized protein from Cryphonectria parasitica (Chestnut blight fungus).